The following is a 408-amino-acid chain: S-adenosylmethionine synthase (408 aa).

ATP is bound at residue His-16. Residue Asp-18 participates in Mg(2+) binding. Glu-44 lines the K(+) pocket. L-methionine is bound by residues Glu-57 and Gln-100. The flexible loop stretch occupies residues 100–110; the sequence is QSPEINQGVSR. ATP is bound by residues 177-179, Asp-257, 263-264, Ala-280, and Lys-284; these read DGK and RK. Asp-257 provides a ligand contact to L-methionine. Residue Lys-288 participates in L-methionine binding.

The protein belongs to the AdoMet synthase family. Homotetramer; dimer of dimers. Mg(2+) serves as cofactor. The cofactor is K(+).

It is found in the cytoplasm. It catalyses the reaction L-methionine + ATP + H2O = S-adenosyl-L-methionine + phosphate + diphosphate. It participates in amino-acid biosynthesis; S-adenosyl-L-methionine biosynthesis; S-adenosyl-L-methionine from L-methionine: step 1/1. In terms of biological role, catalyzes the formation of S-adenosylmethionine (AdoMet) from methionine and ATP. The overall synthetic reaction is composed of two sequential steps, AdoMet formation and the subsequent tripolyphosphate hydrolysis which occurs prior to release of AdoMet from the enzyme. The sequence is that of S-adenosylmethionine synthase from Bifidobacterium animalis subsp. lactis (strain AD011).